Consider the following 465-residue polypeptide: Trigger factor (465 aa).

The PPIase FKBP-type domain occupies 164 to 245 (GDFVSIDLSA…VQSVKERELP (82 aa)). The interval 430–465 (GNTVDTAEMFGEPAAEPEQADAAQAGDAEKAAADSE) is disordered. Low complexity predominate over residues 440–455 (GEPAAEPEQADAAQAG). Basic and acidic residues predominate over residues 456–465 (DAEKAAADSE).

Belongs to the FKBP-type PPIase family. Tig subfamily.

The protein localises to the cytoplasm. The enzyme catalyses [protein]-peptidylproline (omega=180) = [protein]-peptidylproline (omega=0). Its function is as follows. Involved in protein export. Acts as a chaperone by maintaining the newly synthesized protein in an open conformation. Functions as a peptidyl-prolyl cis-trans isomerase. The sequence is that of Trigger factor from Nocardia farcinica (strain IFM 10152).